A 277-amino-acid chain; its full sequence is Large ribosomal subunit protein uL2 (277 aa).

2 disordered regions span residues lysine 32–glycine 58 and valine 225–asparagine 277.

This sequence belongs to the universal ribosomal protein uL2 family. As to quaternary structure, part of the 50S ribosomal subunit. Forms a bridge to the 30S subunit in the 70S ribosome.

Its function is as follows. One of the primary rRNA binding proteins. Required for association of the 30S and 50S subunits to form the 70S ribosome, for tRNA binding and peptide bond formation. It has been suggested to have peptidyltransferase activity; this is somewhat controversial. Makes several contacts with the 16S rRNA in the 70S ribosome. The polypeptide is Large ribosomal subunit protein uL2 (Borrelia duttonii (strain Ly)).